The sequence spans 337 residues: Phenylalanine--tRNA ligase alpha subunit (337 aa).

Residue Glu258 participates in Mg(2+) binding.

It belongs to the class-II aminoacyl-tRNA synthetase family. Phe-tRNA synthetase alpha subunit type 1 subfamily. Tetramer of two alpha and two beta subunits. It depends on Mg(2+) as a cofactor.

It is found in the cytoplasm. It carries out the reaction tRNA(Phe) + L-phenylalanine + ATP = L-phenylalanyl-tRNA(Phe) + AMP + diphosphate + H(+). The polypeptide is Phenylalanine--tRNA ligase alpha subunit (Burkholderia mallei (strain ATCC 23344)).